Reading from the N-terminus, the 207-residue chain is ATP-dependent Clp protease proteolytic subunit (207 aa).

Serine 111 serves as the catalytic Nucleophile. Residue histidine 136 is part of the active site.

Belongs to the peptidase S14 family. Fourteen ClpP subunits assemble into 2 heptameric rings which stack back to back to give a disk-like structure with a central cavity, resembling the structure of eukaryotic proteasomes.

Its subcellular location is the cytoplasm. The enzyme catalyses Hydrolysis of proteins to small peptides in the presence of ATP and magnesium. alpha-casein is the usual test substrate. In the absence of ATP, only oligopeptides shorter than five residues are hydrolyzed (such as succinyl-Leu-Tyr-|-NHMec, and Leu-Tyr-Leu-|-Tyr-Trp, in which cleavage of the -Tyr-|-Leu- and -Tyr-|-Trp bonds also occurs).. Functionally, cleaves peptides in various proteins in a process that requires ATP hydrolysis. Has a chymotrypsin-like activity. Plays a major role in the degradation of misfolded proteins. This is ATP-dependent Clp protease proteolytic subunit from Psychromonas ingrahamii (strain DSM 17664 / CCUG 51855 / 37).